Reading from the N-terminus, the 699-residue chain is Elongation factor G (699 aa).

Residues 10–292 (DRTRNIGIMA…AVIDYLPSPT (283 aa)) form the tr-type G domain. Residues 19-26 (AHIDAGKT), 90-94 (DTPGH), and 144-147 (NKMD) each bind GTP.

It belongs to the TRAFAC class translation factor GTPase superfamily. Classic translation factor GTPase family. EF-G/EF-2 subfamily.

The protein localises to the cytoplasm. Functionally, catalyzes the GTP-dependent ribosomal translocation step during translation elongation. During this step, the ribosome changes from the pre-translocational (PRE) to the post-translocational (POST) state as the newly formed A-site-bound peptidyl-tRNA and P-site-bound deacylated tRNA move to the P and E sites, respectively. Catalyzes the coordinated movement of the two tRNA molecules, the mRNA and conformational changes in the ribosome. This chain is Elongation factor G, found in Coxiella burnetii (strain Dugway 5J108-111).